The sequence spans 435 residues: Prenyltransferase nanD (435 aa).

Glu-101 contributes to the substrate binding site. Arg-114, Lys-202, and Tyr-204 together coordinate dimethylallyl diphosphate. Tyr-206 serves as a coordination point for substrate. Residues Lys-280, Tyr-282, Tyr-364, Tyr-429, and Tyr-433 each contribute to the dimethylallyl diphosphate site.

This sequence belongs to the tryptophan dimethylallyltransferase family.

Its pathway is secondary metabolite biosynthesis. In terms of biological role, prenyltransferase; part of the gene cluster that mediates the biosynthesis of the benzazepine alkaloid nanangelenin A which contains an unprecedented 3,4-dihydro-1-benzazepine-2,5-dione-N-prenyl-N-acetoxy-anthranilamide scaffold. The first step of nanangelenin biosynthesis is catalyzed by the indoleamine 2,3-dioxygenase nanC which produces N-formyl-kynurenine through the catabolism of tryptophan. The two-module NRPS nanA then utilizes anthranilate (Ant) and L-kynurenine (L-Kyn) to assemble the dipeptide product nanangelenin B. The first adenylation domain of nanA (A1) loads anthranilate onto the T1 domain, while A2 loads kynurenine, generated through spontaneous nonenzymatic deformylation of the nanC-supplied N-formyl-kynurenine. The peptide bond formation between the tethered amino acids is catalyzed by the first condensation domain (C1) between anthranilate's carbonyl carbon and kynurenine's aliphatic primary amine. The second C domain (C2) catalyzes the final cyclization event between the aromatic amine of kynurenine and the tethered carbonyl carbon, yielding nanangelenin B. The terminal T3 domain enhances the catalytic efficiency of C2, suggesting the T2-tethered Ant-L-Kyn is transferred to T3 prior to cyclization by C2. Once released from nanA, nanangelenin B is then prenylated by the prenyltransferase nanD to form nanangelenin C. Nanangelenin C is then N-hydroxylated by the FAD-dependent monooxygenase nanF and further acetylated by the acetyltransferase nanB to yield nanangelenin F. Finally, the N-methyltransferase nanE methylates the amide nitrogen of 1-benzazepine to convert nanangelenin F into nanangelenin A. NanE is also able to methylate most of the intermediates of the pathway such as nanangelenin B and nanangelenin C to produce nanangelenin D and nanangelenin E, respectively. In Aspergillus nanangensis, this protein is Prenyltransferase nanD.